The chain runs to 254 residues: Sec-independent protein translocase protein TatCy (254 aa).

The next 6 membrane-spanning stretches (helical) occupy residues 24–44 (IVALAFVVFFIAGFFLAKPII), 67–87 (LYVFMQFAFIIGIVLTSPVIL), 112–132 (VSILLFLAGLSFSYYILFPFV), 157–177 (FLLQLTIPFGLLFQMPVILMF), 187–207 (MFLAKIRKYAYFTLLVIAALI), and 212–232 (LLSHMMVTVPLLILYEISILI).

Belongs to the TatC family. Forms a complex with TatAy. Two types of complexes exist: one composed of TatAy and TatCy, and another composed only of TatAy.

It is found in the cell membrane. Part of the twin-arginine translocation (Tat) system that transports large folded proteins containing a characteristic twin-arginine motif in their signal peptide across membranes. Required for YwbN secretion. The protein is Sec-independent protein translocase protein TatCy of Bacillus subtilis (strain 168).